A 160-amino-acid chain; its full sequence is Nucleotide-binding protein VF_1240 (160 aa).

Belongs to the YajQ family.

Nucleotide-binding protein. The polypeptide is Nucleotide-binding protein VF_1240 (Aliivibrio fischeri (strain ATCC 700601 / ES114) (Vibrio fischeri)).